A 118-amino-acid chain; its full sequence is Large ribosomal subunit protein uL18 (118 aa).

Belongs to the universal ribosomal protein uL18 family. In terms of assembly, part of the 50S ribosomal subunit; part of the 5S rRNA/L5/L18/L25 subcomplex. Contacts the 5S and 23S rRNAs.

In terms of biological role, this is one of the proteins that bind and probably mediate the attachment of the 5S RNA into the large ribosomal subunit, where it forms part of the central protuberance. The chain is Large ribosomal subunit protein uL18 from Parvibaculum lavamentivorans (strain DS-1 / DSM 13023 / NCIMB 13966).